Reading from the N-terminus, the 199-residue chain is Recombination protein RecR (199 aa).

The segment at 57-72 (CSICGNFTDRDPCRLC) adopts a C4-type zinc-finger fold. One can recognise a Toprim domain in the interval 80–175 (SCICVVEEAR…KVTRLAYGLP (96 aa)).

The protein belongs to the RecR family.

Functionally, may play a role in DNA repair. It seems to be involved in an RecBC-independent recombinational process of DNA repair. It may act with RecF and RecO. The chain is Recombination protein RecR from Moorella thermoacetica (strain ATCC 39073 / JCM 9320).